The sequence spans 142 residues: Nucleoside diphosphate kinase (142 aa).

6 residues coordinate ATP: Lys11, Phe59, Arg87, Thr93, Arg104, and Asn114. The active-site Pros-phosphohistidine intermediate is His117.

The protein belongs to the NDK family. Homotetramer. Requires Mg(2+) as cofactor.

It localises to the cytoplasm. It catalyses the reaction a 2'-deoxyribonucleoside 5'-diphosphate + ATP = a 2'-deoxyribonucleoside 5'-triphosphate + ADP. The catalysed reaction is a ribonucleoside 5'-diphosphate + ATP = a ribonucleoside 5'-triphosphate + ADP. Its function is as follows. Major role in the synthesis of nucleoside triphosphates other than ATP. The ATP gamma phosphate is transferred to the NDP beta phosphate via a ping-pong mechanism, using a phosphorylated active-site intermediate. The protein is Nucleoside diphosphate kinase of Yersinia pseudotuberculosis serotype O:1b (strain IP 31758).